Here is a 530-residue protein sequence, read N- to C-terminus: Rho GTPase-activating protein 36 (530 aa).

The signal sequence occupies residues 1-19; that stretch reads MPPLLLLSALIFLVNVLGG. A Rho-GAP domain is found at 209 to 409; that stretch reads MSLNPIAKQI…AMIDNWDVLF (201 aa). The tract at residues 471–512 is disordered; that stretch reads GQSKPFDEGSSEEPAVPPGTARSHDDEEGAGNPLILEQDRPL.

As to quaternary structure, may interacts (via the Rho-GAP domain) with the active form of RAC1.

GTPase activator for the Rho-type GTPases by converting them to an inactive GDP-bound state. The chain is Rho GTPase-activating protein 36 (ARHGAP36) from Bos taurus (Bovine).